The sequence spans 296 residues: Homoserine kinase (296 aa).

ATP is bound at residue proline 84–serine 94.

Belongs to the GHMP kinase family. Homoserine kinase subfamily.

The protein localises to the cytoplasm. It carries out the reaction L-homoserine + ATP = O-phospho-L-homoserine + ADP + H(+). It participates in amino-acid biosynthesis; L-threonine biosynthesis; L-threonine from L-aspartate: step 4/5. Its function is as follows. Catalyzes the ATP-dependent phosphorylation of L-homoserine to L-homoserine phosphate. In Lactococcus lactis subsp. cremoris (Streptococcus cremoris), this protein is Homoserine kinase (thrB).